The sequence spans 101 residues: MAKKSAVAREVKRRKLVEANFQKRAELRKLAKSLSVSEEERERAREALNKMRRDTSPSRLHNRCLLTGRPRGYLRKFAISRICFRQMASMGDIPGVVKASW.

Belongs to the universal ribosomal protein uS14 family. In terms of assembly, part of the 30S ribosomal subunit. Contacts proteins S3 and S10.

Binds 16S rRNA, required for the assembly of 30S particles and may also be responsible for determining the conformation of the 16S rRNA at the A site. The polypeptide is Small ribosomal subunit protein uS14 (Chlamydia trachomatis serovar L2 (strain ATCC VR-902B / DSM 19102 / 434/Bu)).